The sequence spans 696 residues: Elongation factor G (696 aa).

A tr-type G domain is found at 8–290 (ERYRNIGISA…KVIELMPAPT (283 aa)). Residues 17–24 (AHIDAGKT), 88–92 (DTPGH), and 142–145 (NKMD) each bind GTP.

It belongs to the TRAFAC class translation factor GTPase superfamily. Classic translation factor GTPase family. EF-G/EF-2 subfamily.

The protein localises to the cytoplasm. Its function is as follows. Catalyzes the GTP-dependent ribosomal translocation step during translation elongation. During this step, the ribosome changes from the pre-translocational (PRE) to the post-translocational (POST) state as the newly formed A-site-bound peptidyl-tRNA and P-site-bound deacylated tRNA move to the P and E sites, respectively. Catalyzes the coordinated movement of the two tRNA molecules, the mRNA and conformational changes in the ribosome. This Thiobacillus denitrificans (strain ATCC 25259 / T1) protein is Elongation factor G.